The chain runs to 321 residues: MLTLNKTDLIPASFILNGVPGLEDTQLWISFPFCSMYVVAMVGNCGLLYLIHYEDALHKPMYYFLAMLSFTDLVMCSSTIPKALCIFWFHLKDIGFDECLVQMFFTHTFTGMESGVLMLMALDRYVAICYPLRYSTILTNPVIAKVGTATFLRGVLLIIPFTFLTKLLPYCRGNILPHTYCDHMSVAKLSCGNVKVNAIYGLMVALLIWGFDILCITNSYTMILRAVVSLSSADARQKAFNTCTAHICAIVFSYTPAFFSFFSHRFGEHIIPPSCHIIVANIYLLLPPTMNPIVYGVKTKQIRDCVIRILSGSKDTKSYSM.

Residues 1-27 (MLTLNKTDLIPASFILNGVPGLEDTQL) lie on the Extracellular side of the membrane. N-linked (GlcNAc...) asparagine glycosylation occurs at Asn-5. A helical membrane pass occupies residues 28 to 48 (WISFPFCSMYVVAMVGNCGLL). Residues 49 to 56 (YLIHYEDA) are Cytoplasmic-facing. A helical membrane pass occupies residues 57-77 (LHKPMYYFLAMLSFTDLVMCS). Residues 78-101 (STIPKALCIFWFHLKDIGFDECLV) lie on the Extracellular side of the membrane. A disulfide bond links Cys-99 and Cys-191. The chain crosses the membrane as a helical span at residues 102 to 122 (QMFFTHTFTGMESGVLMLMAL). Residues 123–141 (DRYVAICYPLRYSTILTNP) lie on the Cytoplasmic side of the membrane. A helical membrane pass occupies residues 142-162 (VIAKVGTATFLRGVLLIIPFT). Residues 163–198 (FLTKLLPYCRGNILPHTYCDHMSVAKLSCGNVKVNA) lie on the Extracellular side of the membrane. A helical transmembrane segment spans residues 199-219 (IYGLMVALLIWGFDILCITNS). The Cytoplasmic segment spans residues 220-239 (YTMILRAVVSLSSADARQKA). The chain crosses the membrane as a helical span at residues 240–260 (FNTCTAHICAIVFSYTPAFFS). Residues 261–276 (FFSHRFGEHIIPPSCH) are Extracellular-facing. A helical membrane pass occupies residues 277 to 297 (IIVANIYLLLPPTMNPIVYGV). Residues 298–321 (KTKQIRDCVIRILSGSKDTKSYSM) are Cytoplasmic-facing.

Belongs to the G-protein coupled receptor 1 family.

Its subcellular location is the cell membrane. Odorant receptor. In Homo sapiens (Human), this protein is Olfactory receptor 52N4 (OR52N4).